The chain runs to 453 residues: MNIVILAAGTGKRMRSALPKVLHPVAGRPLLSHVIATARTLQPSRLVVVVGHGAEQVRAAVAAPDIQFAVQAEQLGTGHAVRQALPLLDPAQPTLVLYGDVPLTRASTLQRLVDAARDGRYGILTVTLDDPTGYGRIVRDASGFVTRIVEQKDATPDELKIAEINTGIIVTPTAQLAMWLGALKNENAQGEYYLTDVVELAIEAGFEIVTAQPDEEWETLGVNSKAQLAELERIHQRNVADALLADGVTLADPARIDVRGTLRCGRDVSIDVNCVFEGDVTLADNVTIGANCVIRNASVGAGTRIDAFTHIDGAELGAHTVIGPYARLRPGAQLADEAHVGNFVEVKNAVIGHGSKANHLTYIGDADIGARVNIGAGTITCNYDGANKFRTVIEDDVFVGSDTQLVAPVHVGRGVTIAAGTTVWKDVADGVLALNEKTQTAKSGYVRPVKKKS.

The interval 1–225 is pyrophosphorylase; it reads MNIVILAAGT…EWETLGVNSK (225 aa). UDP-N-acetyl-alpha-D-glucosamine is bound by residues 6 to 9, Lys-20, Gln-71, 76 to 77, 98 to 100, Gly-135, Glu-150, Asn-165, and Asn-223; these read LAAG, GT, and YGD. Asp-100 lines the Mg(2+) pocket. Residue Asn-223 coordinates Mg(2+). Residues 226–246 are linker; that stretch reads AQLAELERIHQRNVADALLAD. Residues 247–453 are N-acetyltransferase; it reads GVTLADPARI…GYVRPVKKKS (207 aa). UDP-N-acetyl-alpha-D-glucosamine contacts are provided by Arg-329 and Lys-347. Residue His-359 is the Proton acceptor of the active site. UDP-N-acetyl-alpha-D-glucosamine-binding residues include Tyr-362 and Asn-373. Acetyl-CoA contacts are provided by residues Ala-376, 382–383, Ser-401, and Ala-419; that span reads NY.

It in the N-terminal section; belongs to the N-acetylglucosamine-1-phosphate uridyltransferase family. In the C-terminal section; belongs to the transferase hexapeptide repeat family. As to quaternary structure, homotrimer. Mg(2+) serves as cofactor.

The protein localises to the cytoplasm. The enzyme catalyses alpha-D-glucosamine 1-phosphate + acetyl-CoA = N-acetyl-alpha-D-glucosamine 1-phosphate + CoA + H(+). The catalysed reaction is N-acetyl-alpha-D-glucosamine 1-phosphate + UTP + H(+) = UDP-N-acetyl-alpha-D-glucosamine + diphosphate. It functions in the pathway nucleotide-sugar biosynthesis; UDP-N-acetyl-alpha-D-glucosamine biosynthesis; N-acetyl-alpha-D-glucosamine 1-phosphate from alpha-D-glucosamine 6-phosphate (route II): step 2/2. The protein operates within nucleotide-sugar biosynthesis; UDP-N-acetyl-alpha-D-glucosamine biosynthesis; UDP-N-acetyl-alpha-D-glucosamine from N-acetyl-alpha-D-glucosamine 1-phosphate: step 1/1. Its pathway is bacterial outer membrane biogenesis; LPS lipid A biosynthesis. In terms of biological role, catalyzes the last two sequential reactions in the de novo biosynthetic pathway for UDP-N-acetylglucosamine (UDP-GlcNAc). The C-terminal domain catalyzes the transfer of acetyl group from acetyl coenzyme A to glucosamine-1-phosphate (GlcN-1-P) to produce N-acetylglucosamine-1-phosphate (GlcNAc-1-P), which is converted into UDP-GlcNAc by the transfer of uridine 5-monophosphate (from uridine 5-triphosphate), a reaction catalyzed by the N-terminal domain. The chain is Bifunctional protein GlmU from Burkholderia multivorans (strain ATCC 17616 / 249).